Reading from the N-terminus, the 123-residue chain is Large ribosomal subunit protein uL14c (123 aa).

It belongs to the universal ribosomal protein uL14 family. As to quaternary structure, part of the 50S ribosomal subunit.

It localises to the plastid. The protein resides in the chloroplast. In terms of biological role, binds to 23S rRNA. This chain is Large ribosomal subunit protein uL14c, found in Sorghum bicolor (Sorghum).